Reading from the N-terminus, the 212-residue chain is 2,3-bisphosphoglycerate-dependent phosphoglycerate mutase (212 aa).

Substrate-binding positions include 9-16 (RHGQSEWN), 22-23 (TG), Arg61, 88-91 (ERDY), Lys99, 115-116 (RR), and 159-160 (GN). His10 (tele-phosphohistidine intermediate) is an active-site residue. Glu88 functions as the Proton donor/acceptor in the catalytic mechanism.

The protein belongs to the phosphoglycerate mutase family. BPG-dependent PGAM subfamily. Homodimer.

It catalyses the reaction (2R)-2-phosphoglycerate = (2R)-3-phosphoglycerate. The protein operates within carbohydrate degradation; glycolysis; pyruvate from D-glyceraldehyde 3-phosphate: step 3/5. Functionally, catalyzes the interconversion of 2-phosphoglycerate and 3-phosphoglycerate. This chain is 2,3-bisphosphoglycerate-dependent phosphoglycerate mutase, found in Methylobacterium radiotolerans (strain ATCC 27329 / DSM 1819 / JCM 2831 / NBRC 15690 / NCIMB 10815 / 0-1).